The following is a 310-amino-acid chain: Thymidine kinase (310 aa).

Residue 17-24 coordinates ATP; the sequence is GPFGIGKT. E45 (proton acceptor) is an active-site residue. Residue Q86 coordinates substrate. Residue R176 coordinates ATP. Position 182 (R182) interacts with substrate.

The protein belongs to the herpesviridae thymidine kinase family. As to quaternary structure, homodimer.

The catalysed reaction is thymidine + ATP = dTMP + ADP + H(+). Functionally, catalyzes the transfer of the gamma-phospho group of ATP to thymidine to generate dTMP in the salvage pathway of pyrimidine synthesis. The dTMP serves as a substrate for DNA polymerase during viral DNA replication. Allows the virus to be reactivated and to grow in non-proliferative cells lacking a high concentration of phosphorylated nucleic acid precursors. The sequence is that of Thymidine kinase from Gallus gallus (Chicken).